The following is a 460-amino-acid chain: Exodeoxyribonuclease 7 large subunit (460 aa).

A disordered region spans residues 438–460 (ARVEKVNREEEKQSGSQKNGTRD). Over residues 439 to 450 (RVEKVNREEEKQ) the composition is skewed to basic and acidic residues. The span at 451-460 (SGSQKNGTRD) shows a compositional bias: polar residues.

The protein belongs to the XseA family. Heterooligomer composed of large and small subunits.

It localises to the cytoplasm. It catalyses the reaction Exonucleolytic cleavage in either 5'- to 3'- or 3'- to 5'-direction to yield nucleoside 5'-phosphates.. Bidirectionally degrades single-stranded DNA into large acid-insoluble oligonucleotides, which are then degraded further into small acid-soluble oligonucleotides. The chain is Exodeoxyribonuclease 7 large subunit from Brevibacillus brevis (strain 47 / JCM 6285 / NBRC 100599).